The chain runs to 636 residues: MGNKNVFENENVKLRLIDLEYDYKQKFASTIASEVKKAKKDFEADIRRIYKEETHHDLPENMKIEIYTSNELVNQNTSIQSSTRESGYDGTAIHIIDEKKHIDQLQIISEGSADNKDWSYNFFGLFLGIDHSQYEATKEFTNKAKKAAGNSEDLKTFALGHSLANNNQVMVQLIDGEYDEVYGVNGAQVNIDQLLETDESLYRYVIRKFSYKYEDIDSIPPEKLKKEIQKYYEDKGVTTNITQRISKDDPLYGVSGKADFITFGDVKMADTNTSVKGIRNIMDGVPDEDVRSIQKFLQKYKDDYEKDGLNGFIKAASGIDIDLIEKVKNTDGALKKVSVLYEHFDDVKQMYGRIKEELPSFLGFLHTLLRNSGPVVDQLAENGYIDETQKKVIKKELTNINASMRGIESRYEHFIDHLKHGQFMQALKDVGEIVDYVKSILSSLKTLDTETKDALKLIVDGHSIVQMLNALSKEKGFSYKGSDIYFTGKSGSGETIQVNLSSAVRIYQNGMKIVEDMEDAISKYQKVYSQEIDEDFIDKKQAIITAIHHMEENPSHYAFDLQFRLAAGFSHTFDKLEKISVHESFHTGALPANDGIVAELKKQTTEKRDFIKNIRESIEKLFEKEEMISQLFDFQS.

This is an uncharacterized protein from Bacillus subtilis (strain 168).